The sequence spans 1051 residues: MRETPKKVLVIGSGPIKIAEAAEFDYSGSQALKALKEEGIETVLVNSNVATVQTSKKFADKLYMLPVVWWAVEKVIEKERPDGIMIGFGGQTALNVGVDLHKKGVLQKYNVKVLGTQIDGIEKALSREKFRETMIENNLPVPPSLSARSEEEAIKNAKIVGYPVMVRVSFNLGGRGSMVAWTEEDLKKNIRRALSQSYIGEVLLEKYLYHWIELEYEVMRDKKGNSAVIACIENLDPMGVHTGESTVVAPCQTLDNLEYQNMRTYTIEVARSINLIGECNVQFALNPRGYEYYIIETNPRMSRSSALASKATGYPLAYVSAKLALGYELHEVINKVSGRTCACFEPSLDYIVTKIPRWDLSKFENVDQSLATEMMSVGEVMSIGRSFEESLQKAIRMLDIGEPGVVGGKVYESNMSKEEALKYLKERRPYWFLYAAKAFKEGATINEVYEVTGINEFFLNKIKGLVDFYETLRKLKEIDKETLKLAKKLGFSDEQISKALNKSTEYVRKIRYETNTIPVVKLIDTLAGEWPAVTNYMYLTYNGTEDDIEFSQGNKLLIIGAGGFRIGVSVEFDWSVVSLMEAGSKYFDEVAVLNYNPETVSTDWDIARKLYFDEISVERVLDLIKKEKFRYVATFSGGQIGNSIAKELEENGVRLLGTSGSSVDIAENREKFSKLLDKLGISQPDWISATSLGEIKKFANEVGFPVLVRPSYVLSGSSMKIAYSEEELYEYVRRATEISPKYPVVISKYIENAIEAEIDGVSDGNKVLGITLEHIEEAGVHSGDATMSIPFRKLSENNVNRMRENVLNIARELNIKGPFNVQFVVKENTPYIIELNLRASRSMPFSSKAKGINLINESMKAIFDGLDFSEDYYEPPSKYWAVKSAQFSWSQLRGAYPFLGPEMKSTGEAASFGVTFYDALLKSWLSSMPNRIPNKNGIALVYGNKNLDYLKDTADNLTRFGLTVYSISELPLQDIETIDKMKAEELVRAKKVEIIVTDGYLKKFDYNIRRTAVDYNIPIILNGRLGYEVSKAFLNYDSLTFFEISEYGGGI.

The interval 1–399 (MRETPKKVLV…SLQKAIRMLD (399 aa)) is carboxyphosphate synthetic domain. Residues Arg127, Arg167, Gly173, Gly174, Lys206, Leu208, Glu213, Gly239, Val240, His241, Gln282, and Glu296 each contribute to the ATP site. In terms of domain architecture, ATP-grasp 1 spans 131–325 (RETMIENNLP…LAYVSAKLAL (195 aa)). Mg(2+) contacts are provided by Gln282, Glu296, and Asn298. Gln282, Glu296, and Asn298 together coordinate Mn(2+). Residues 400–548 (IGEPGVVGGK…LTYNGTEDDI (149 aa)) form an oligomerization domain region. Residues 549 to 930 (EFSQGNKLLI…LKSWLSSMPN (382 aa)) are carbamoyl phosphate synthetic domain. An ATP-grasp 2 domain is found at 673 to 863 (SKLLDKLGIS…LINESMKAIF (191 aa)). The ATP site is built by Arg709, Lys748, Ile750, Glu755, Gly779, Val780, His781, Ser782, Gln822, and Glu834. The Mg(2+) site is built by Gln822, Glu834, and Asn836. Gln822, Glu834, and Asn836 together coordinate Mn(2+). Residues 930-1051 (NRIPNKNGIA…FEISEYGGGI (122 aa)) enclose the MGS-like domain. The interval 931 to 1051 (RIPNKNGIAL…FEISEYGGGI (121 aa)) is allosteric domain.

Belongs to the CarB family. As to quaternary structure, composed of two chains; the small (or glutamine) chain promotes the hydrolysis of glutamine to ammonia, which is used by the large (or ammonia) chain to synthesize carbamoyl phosphate. Tetramer of heterodimers (alpha,beta)4. Mg(2+) is required as a cofactor. Mn(2+) serves as cofactor.

The catalysed reaction is hydrogencarbonate + L-glutamine + 2 ATP + H2O = carbamoyl phosphate + L-glutamate + 2 ADP + phosphate + 2 H(+). It carries out the reaction hydrogencarbonate + NH4(+) + 2 ATP = carbamoyl phosphate + 2 ADP + phosphate + 2 H(+). Its pathway is amino-acid biosynthesis; L-arginine biosynthesis; carbamoyl phosphate from bicarbonate: step 1/1. It participates in pyrimidine metabolism; UMP biosynthesis via de novo pathway; (S)-dihydroorotate from bicarbonate: step 1/3. In terms of biological role, large subunit of the glutamine-dependent carbamoyl phosphate synthetase (CPSase). CPSase catalyzes the formation of carbamoyl phosphate from the ammonia moiety of glutamine, carbonate, and phosphate donated by ATP, constituting the first step of 2 biosynthetic pathways, one leading to arginine and/or urea and the other to pyrimidine nucleotides. The large subunit (synthetase) binds the substrates ammonia (free or transferred from glutamine from the small subunit), hydrogencarbonate and ATP and carries out an ATP-coupled ligase reaction, activating hydrogencarbonate by forming carboxy phosphate which reacts with ammonia to form carbamoyl phosphate. This Saccharolobus solfataricus (strain ATCC 35092 / DSM 1617 / JCM 11322 / P2) (Sulfolobus solfataricus) protein is Carbamoyl phosphate synthase large chain.